Consider the following 518-residue polypeptide: Putative succinate-semialdehyde dehydrogenase [NADP(+)] 2 (518 aa).

NADP(+) is bound by residues 157 to 158 (WN), 181 to 184 (KPDS), and 232 to 233 (GS). E254 functions as the Proton acceptor in the catalytic mechanism. L255 contributes to the NADP(+) binding site. The active-site Nucleophile is C288. E386 provides a ligand contact to NADP(+).

Belongs to the aldehyde dehydrogenase family.

The enzyme catalyses succinate semialdehyde + NADP(+) + H2O = succinate + NADPH + 2 H(+). In terms of biological role, catalyzes the NADP(+)-dependent oxidation of succinate semialdehyde to succinate. Although it has succinate semialdehyde dehydrogenase activity, is likely to act physiologically on a different aldehyde(s). In Mycobacterium ulcerans (strain Agy99), this protein is Putative succinate-semialdehyde dehydrogenase [NADP(+)] 2 (gabD2).